We begin with the raw amino-acid sequence, 211 residues long: tRNA (guanine-N(7)-)-methyltransferase (211 aa).

S-adenosyl-L-methionine-binding residues include E44, D69, D96, and D118. Residue D118 is part of the active site. Substrate is bound at residue K122. Positions 124 to 129 (KHEKRR) are interaction with RNA. Residues D154 and 191-194 (TEYE) contribute to the substrate site.

Belongs to the class I-like SAM-binding methyltransferase superfamily. TrmB family.

It catalyses the reaction guanosine(46) in tRNA + S-adenosyl-L-methionine = N(7)-methylguanosine(46) in tRNA + S-adenosyl-L-homocysteine. It functions in the pathway tRNA modification; N(7)-methylguanine-tRNA biosynthesis. Its function is as follows. Catalyzes the formation of N(7)-methylguanine at position 46 (m7G46) in tRNA. The chain is tRNA (guanine-N(7)-)-methyltransferase from Streptococcus uberis (strain ATCC BAA-854 / 0140J).